A 354-amino-acid chain; its full sequence is S-adenosylmethionine:tRNA ribosyltransferase-isomerase (354 aa).

The protein belongs to the QueA family. In terms of assembly, monomer.

It is found in the cytoplasm. It catalyses the reaction 7-aminomethyl-7-carbaguanosine(34) in tRNA + S-adenosyl-L-methionine = epoxyqueuosine(34) in tRNA + adenine + L-methionine + 2 H(+). The protein operates within tRNA modification; tRNA-queuosine biosynthesis. In terms of biological role, transfers and isomerizes the ribose moiety from AdoMet to the 7-aminomethyl group of 7-deazaguanine (preQ1-tRNA) to give epoxyqueuosine (oQ-tRNA). The sequence is that of S-adenosylmethionine:tRNA ribosyltransferase-isomerase from Klebsiella pneumoniae (strain 342).